We begin with the raw amino-acid sequence, 117 residues long: U9-theraphotoxin-Hhn1a (117 aa).

A signal peptide spans 1 to 21 (MNTVRVTFLLVFVLAVSLGQA). A propeptide spanning residues 22 to 75 (DEDGNRMEMRQEIEKTEADSSYFAENLLLQKLEELEAKLWEETSEESRNSRQKR) is cleaved from the precursor. Disulfide bonds link cysteine 76–cysteine 94, cysteine 83–cysteine 99, and cysteine 93–cysteine 114.

It belongs to the neurotoxin 14 (magi-1) family. 01 (HNTX-16) subfamily. As to expression, expressed by the venom gland.

The protein resides in the secreted. Functionally, probable ion channel inhibitor. The polypeptide is U9-theraphotoxin-Hhn1a (Cyriopagopus hainanus (Chinese bird spider)).